Reading from the N-terminus, the 660-residue chain is Probable E3 ubiquitin ligase complex SCF subunit sconB (660 aa).

Basic and acidic residues predominate over residues methionine 1–glutamate 13. 2 disordered regions span residues methionine 1–tyrosine 34 and leucine 86–alanine 108. An F-box domain is found at isoleucine 175–methionine 221. 7 WD repeats span residues glycine 340 to threonine 379, histidine 381 to threonine 419, histidine 421 to leucine 457, glycine 459 to glutamine 500, serine 542 to threonine 586, phenylalanine 587 to threonine 626, and glycine 629 to asparagine 660. The segment at glycine 521–phenylalanine 553 is disordered. Residues asparagine 531–proline 548 are compositionally biased toward polar residues.

This sequence belongs to the WD repeat MET30/SCONB/SCON-2 family. Component of the SCF(sconB) E3 ubiquitin ligase complex.

It functions in the pathway protein modification; protein ubiquitination. In terms of biological role, component of the SCF(sconB) E3 ubiquitin ligase complex involved in the regulation of sulfur metabolite repression, probably by mediating the inactivation or degradation of the metR transcription factor. The sequence is that of Probable E3 ubiquitin ligase complex SCF subunit sconB (sconB) from Talaromyces marneffei (strain ATCC 18224 / CBS 334.59 / QM 7333) (Penicillium marneffei).